We begin with the raw amino-acid sequence, 271 residues long: Aspartate/glutamate leucyltransferase (271 aa).

The protein belongs to the R-transferase family. Bpt subfamily.

It localises to the cytoplasm. It carries out the reaction N-terminal L-glutamyl-[protein] + L-leucyl-tRNA(Leu) = N-terminal L-leucyl-L-glutamyl-[protein] + tRNA(Leu) + H(+). It catalyses the reaction N-terminal L-aspartyl-[protein] + L-leucyl-tRNA(Leu) = N-terminal L-leucyl-L-aspartyl-[protein] + tRNA(Leu) + H(+). Its function is as follows. Functions in the N-end rule pathway of protein degradation where it conjugates Leu from its aminoacyl-tRNA to the N-termini of proteins containing an N-terminal aspartate or glutamate. This is Aspartate/glutamate leucyltransferase from Acinetobacter baylyi (strain ATCC 33305 / BD413 / ADP1).